The sequence spans 420 residues: Tryptophan--tRNA ligase (420 aa).

The 'HIGH' region motif lies at 72-80; sequence PSGLPHFGH. A 'KMSKS' region motif is present at residues 308–312; that stretch reads KMSSS.

It belongs to the class-I aminoacyl-tRNA synthetase family.

The protein localises to the cytoplasm. It catalyses the reaction tRNA(Trp) + L-tryptophan + ATP = L-tryptophyl-tRNA(Trp) + AMP + diphosphate + H(+). This chain is Tryptophan--tRNA ligase, found in Archaeoglobus fulgidus (strain ATCC 49558 / DSM 4304 / JCM 9628 / NBRC 100126 / VC-16).